Consider the following 178-residue polypeptide: Endoribonuclease YbeY (178 aa).

Zn(2+) contacts are provided by histidine 118, histidine 122, and histidine 128.

The protein belongs to the endoribonuclease YbeY family. The cofactor is Zn(2+).

The protein resides in the cytoplasm. In terms of biological role, single strand-specific metallo-endoribonuclease involved in late-stage 70S ribosome quality control and in maturation of the 3' terminus of the 16S rRNA. This chain is Endoribonuclease YbeY, found in Mycolicibacterium gilvum (strain PYR-GCK) (Mycobacterium gilvum (strain PYR-GCK)).